The chain runs to 598 residues: Thiamine transporter (598 aa).

Residues 1 to 41 (MSFGSKVSRALRFLEIPVKDRASVSFLKNPDLQPIKSANQT) lie on the Cytoplasmic side of the membrane. A helical transmembrane segment spans residues 42–62 (WGFWSNFAYWGVMSFSVGTWM). At 63-73 (SASSALGVGLS) the chain is on the extracellular side. A helical transmembrane segment spans residues 74 to 94 (YPETIGTFIVGDVLTIIFTLA). The Cytoplasmic portion of the chain corresponds to 95 to 111 (NSCPGYDWKVGFTLAQR). The chain crosses the membrane as a helical span at residues 112 to 132 (FVFGIYGSAFGIIIRILMSIV). The Extracellular portion of the chain corresponds to 133-173 (NYGSNAWVGGLCINMILDSWSHHYLHLPNTLSSKVAMTTKE). The chain crosses the membrane as a helical span at residues 174–194 (LIGFIIFHVLTAFCYLMKPYH). The Cytoplasmic portion of the chain corresponds to 195–197 (MNY). A helical membrane pass occupies residues 198–218 (ILIWSCVATFFSMLGMVIYLA). Residues 219–240 (KQAHGVGELFTSTKSTATGSTK) lie on the Extracellular side of the membrane. The chain crosses the membrane as a helical span at residues 241–261 (AWAWVYMISYWFGSVSPGSTN). The Cytoplasmic portion of the chain corresponds to 262–274 (QSDYSRFGSSNWA). The helical transmembrane segment at 275-295 (IWAGTICALLIPTTLIPVFGV) threads the bilayer. Residues 296 to 332 (IGASTCDKLYGEQYWMPMDIFNHWLTTNYSAGARAGA) lie on the Extracellular side of the membrane. Residues 333–353 (FFCGLSFVLSQMSYTISNCGF) form a helical membrane-spanning segment. Over 354 to 371 (ASGMDLAGLLPKYVDIKR) the chain is Cytoplasmic. Residues 372–392 (GALFAACVSWACLPWNFYNSS) traverse the membrane as a helical segment. Residues 393–394 (ST) are Extracellular-facing. Residues 395 to 415 (FLTVMSSFGVVMTPIISVMIC) traverse the membrane as a helical segment. The Cytoplasmic segment spans residues 416 to 446 (DNFLIRKRQYSITNAFILKGEYYFTKGVNWR). A helical transmembrane segment spans residues 447-467 (AIVAWVCGMTPGLPGIAWEVN). At 468-483 (NDYFHNTGIVNFFYGD) the chain is on the extracellular side. A helical transmembrane segment spans residues 484–504 (SFFSFLISFFVYWGLCLLFPF). Over 505–598 (KITVKHDDKD…QSSTASEKAA (94 aa)) the chain is Cytoplasmic. Serine 560 is subject to Phosphoserine. Residues 574-598 (NTNEFEIVHHKNNEKQSSTASEKAA) form a disordered region. A compositionally biased stretch (polar residues) spans 588–598 (KQSSTASEKAA).

This sequence belongs to the purine-cytosine permease (2.A.39) family.

The protein localises to the membrane. In terms of biological role, responsible for intake of thiamine. The chain is Thiamine transporter (THI7) from Saccharomyces cerevisiae (strain ATCC 204508 / S288c) (Baker's yeast).